Consider the following 442-residue polypeptide: Proline--tRNA ligase (442 aa).

Belongs to the class-II aminoacyl-tRNA synthetase family. ProS type 2 subfamily. In terms of assembly, homodimer.

Its subcellular location is the cytoplasm. The enzyme catalyses tRNA(Pro) + L-proline + ATP = L-prolyl-tRNA(Pro) + AMP + diphosphate. Catalyzes the attachment of proline to tRNA(Pro) in a two-step reaction: proline is first activated by ATP to form Pro-AMP and then transferred to the acceptor end of tRNA(Pro). This chain is Proline--tRNA ligase, found in Sinorhizobium medicae (strain WSM419) (Ensifer medicae).